We begin with the raw amino-acid sequence, 201 residues long: ATP synthase subunit delta, chloroplastic (201 aa).

The protein belongs to the ATPase delta chain family. In terms of assembly, F-type ATPases have 2 components, F(1) - the catalytic core - and F(0) - the membrane proton channel. F(1) has five subunits: alpha(3), beta(3), gamma(1), delta(1), epsilon(1). CF(0) has four main subunits: a(1), b(1), b'(1) and c(10-14). The alpha and beta chains form an alternating ring which encloses part of the gamma chain. F(1) is attached to F(0) by a central stalk formed by the gamma and epsilon chains, while a peripheral stalk is formed by the delta, b and b' chains.

The protein resides in the plastid. It is found in the chloroplast thylakoid membrane. Functionally, f(1)F(0) ATP synthase produces ATP from ADP in the presence of a proton or sodium gradient. F-type ATPases consist of two structural domains, F(1) containing the extramembraneous catalytic core and F(0) containing the membrane proton channel, linked together by a central stalk and a peripheral stalk. During catalysis, ATP synthesis in the catalytic domain of F(1) is coupled via a rotary mechanism of the central stalk subunits to proton translocation. This protein is part of the stalk that links CF(0) to CF(1). It either transmits conformational changes from CF(0) to CF(1) or is implicated in proton conduction. The sequence is that of ATP synthase subunit delta, chloroplastic from Vaucheria litorea (Yellow-green alga).